The following is a 130-amino-acid chain: Small ribosomal subunit protein uS9 (130 aa).

It belongs to the universal ribosomal protein uS9 family.

The polypeptide is Small ribosomal subunit protein uS9 (Albidiferax ferrireducens (strain ATCC BAA-621 / DSM 15236 / T118) (Rhodoferax ferrireducens)).